We begin with the raw amino-acid sequence, 79 residues long: Small ribosomal subunit protein bS16 (79 aa).

This sequence belongs to the bacterial ribosomal protein bS16 family.

In Buchnera aphidicola subsp. Acyrthosiphon pisum (strain 5A), this protein is Small ribosomal subunit protein bS16.